We begin with the raw amino-acid sequence, 146 residues long: Ribonuclease H (146 aa).

An RNase H type-1 domain is found at 1-142 (MNKIIIYTDG…ADALANLAMD (142 aa)). Mg(2+)-binding residues include Asp9, Glu47, Asp70, and Asp134.

Belongs to the RNase H family. As to quaternary structure, monomer. Mg(2+) is required as a cofactor.

The protein localises to the cytoplasm. It carries out the reaction Endonucleolytic cleavage to 5'-phosphomonoester.. Functionally, endonuclease that specifically degrades the RNA of RNA-DNA hybrids. This is Ribonuclease H from Ruthia magnifica subsp. Calyptogena magnifica.